Reading from the N-terminus, the 430-residue chain is Chaperone SurA (430 aa).

Residues 1–25 (MQIIKTTIATFTAIAFTGAASFTSA) form the signal peptide. PpiC domains lie at 176–277 (SPDY…KLYE) and 286–385 (VNQT…KVEE).

Its subcellular location is the periplasm. The catalysed reaction is [protein]-peptidylproline (omega=180) = [protein]-peptidylproline (omega=0). Its function is as follows. Chaperone involved in the correct folding and assembly of outer membrane proteins. Recognizes specific patterns of aromatic residues and the orientation of their side chains, which are found more frequently in integral outer membrane proteins. May act in both early periplasmic and late outer membrane-associated steps of protein maturation. The sequence is that of Chaperone SurA from Saccharophagus degradans (strain 2-40 / ATCC 43961 / DSM 17024).